Consider the following 795-residue polypeptide: Phenylalanine--tRNA ligase beta subunit (795 aa).

The 110-residue stretch at 39–148 (AGTFNGVKVG…IDAPIGMDFR (110 aa)) folds into the tRNA-binding domain. Positions 401 to 476 (PKPNKVALRR…RIYGYDNIPN (76 aa)) constitute a B5 domain. Positions 454, 460, 463, and 464 each coordinate Mg(2+). The 94-residue stretch at 701-794 (SKFPANRRDI…VSEKFGASLR (94 aa)) folds into the FDX-ACB domain.

This sequence belongs to the phenylalanyl-tRNA synthetase beta subunit family. Type 1 subfamily. As to quaternary structure, tetramer of two alpha and two beta subunits. Requires Mg(2+) as cofactor.

Its subcellular location is the cytoplasm. It catalyses the reaction tRNA(Phe) + L-phenylalanine + ATP = L-phenylalanyl-tRNA(Phe) + AMP + diphosphate + H(+). The chain is Phenylalanine--tRNA ligase beta subunit from Vibrio vulnificus (strain CMCP6).